The sequence spans 260 residues: Repetitive secreted protein 1 (260 aa).

An N-terminal signal peptide occupies residues 1 to 20 (MKLSFTIVATAALVASCTFA).

Rsp1 is processed by the subtilisin-like endoprotease kex2. Cleavage by kex2 generates 11 peptides.

It is found in the secreted. In terms of biological role, repetitive secreted protein essential for pathogenic development. Hum3 and rsp1 together are pathogenicity proteins that share an essential function in early stages of the infection. In Mycosarcoma maydis (Corn smut fungus), this protein is Repetitive secreted protein 1.